A 282-amino-acid chain; its full sequence is Probable xyloglucan endotransglucosylase/hydrolase protein 18 (282 aa).

The signal sequence occupies residues 1 to 26 (MKLSCGTSFAFLIMFLFAAQSMHVYA). Residues 27 to 218 (GSFHKDVQIH…WSKAPFTAFY (192 aa)) form the GH16 domain. The active-site Nucleophile is the Glu104. Glu108 functions as the Proton donor in the catalytic mechanism. Position 108 (Glu108) interacts with xyloglucan. An N-linked (GlcNAc...) asparagine glycan is attached at Asn112. Xyloglucan-binding positions include 121–123 (HTN), 131–133 (DKE), 197–198 (HW), and Gly202. A disulfide bridge connects residues Cys226 and Cys235. An N-linked (GlcNAc...) asparagine glycan is attached at Asn238. Cys267 and Cys281 are oxidised to a cystine. A xyloglucan-binding site is contributed by Arg272.

It belongs to the glycosyl hydrolase 16 family. XTH group 2 subfamily. In terms of processing, contains at least one intrachain disulfide bond essential for its enzymatic activity. Root specific.

Its subcellular location is the secreted. The protein resides in the cell wall. It is found in the extracellular space. The protein localises to the apoplast. The catalysed reaction is breaks a beta-(1-&gt;4) bond in the backbone of a xyloglucan and transfers the xyloglucanyl segment on to O-4 of the non-reducing terminal glucose residue of an acceptor, which can be a xyloglucan or an oligosaccharide of xyloglucan.. In terms of biological role, catalyzes xyloglucan endohydrolysis (XEH) and/or endotransglycosylation (XET). Cleaves and religates xyloglucan polymers, an essential constituent of the primary cell wall, and thereby participates in cell wall construction of growing tissues. The protein is Probable xyloglucan endotransglucosylase/hydrolase protein 18 (XTH18) of Arabidopsis thaliana (Mouse-ear cress).